The primary structure comprises 1479 residues: Peroxidasin homolog (1479 aa).

The N-terminal stretch at 1–26 is a signal peptide; it reads MAKRSRGPGRRCLLALVLFCAWGTLA. Residues 27-63 form the LRRNT domain; it reads VVAQKPGAGCPSRCLCFRTTVRCMHLLLEAVPAVAPQ. Disulfide bonds link Cys36–Cys42 and Cys40–Cys49. LRR repeat units follow at residues 61 to 84, 85 to 108, 110 to 132, 133 to 156, 157 to 180, and 182 to 204; these read APQTSILDLRFNRIREIQPGAFRR, LRNLNTLLLNNNQIKRIPSGAFED, ENLKYLYLYKNEIQSIDRQAFKG, LASLEQLYLHFNQIETLDPDSFQH, LPKLERLFLHNNRITHLVPGTFNH, and ESMKRLRLDSNTLHCDCEILWLA. The region spanning 192-244 is the LRRCT domain; it reads NTLHCDCEILWLADLLKTYAESGNAQAAAICEYPRRIQGRSVATITPEELNCE. 6 cysteine pairs are disulfide-bonded: Cys196/Cys243, Cys198/Cys222, Cys267/Cys317, Cys363/Cys412, Cys454/Cys502, and Cys546/Cys594. Ig-like C2-type domains lie at 246-332, 342-428, 433-520, and 521-610; these read PRIT…QEVT, PTFV…AFII, PQFT…LTVQ, and PRVT…MVLS. N-linked (GlcNAc...) asparagine glycosylation is found at Asn640, Asn699, Asn719, and Asn731. 4 disulfides stabilise this stretch: Cys723-Cys885, Cys732-Cys748, Cys847-Cys857, and Cys851-Cys875. Asp826 is a heme b binding site. Residue His827 is the Proton acceptor of the active site. Asp828 serves as a coordination point for Ca(2+). A glycan (N-linked (GlcNAc...) asparagine) is linked at Asn865. Ca(2+) contacts are provided by Thr907, Tyr909, Asp911, and Ser913. The cysteines at positions 959 and 970 are disulfide-linked. Residue Asn964 is glycosylated (N-linked (GlcNAc...) asparagine). Heme b contacts are provided by Glu980 and His1074. An LRR 7 repeat occupies 1151 to 1175; it reads ALDLAAINIQRGRDHGIPPYHDYRV. Residue Tyr1176 is modified to Phosphotyrosine. 2 disulfide bridges follow: Cys1177–Cys1234 and Cys1275–Cys1301. N-linked (GlcNAc...) asparagine glycosylation occurs at Asn1178. At Ser1180 the chain carries Phosphoserine. One copy of the LRR 8 repeat lies at 1270–1291; the sequence is LARILCDNADNITRVQSDVFRV. N-linked (GlcNAc...) asparagine glycosylation is found at Asn1280, Asn1368, and Asn1425. The interval 1315-1411 is required in homotrimerization; that stretch reads CCEDCRTRGQ…QIKKLESRLS (97 aa). A disordered region spans residues 1342 to 1380; that stretch reads YQEDKPTKKTRPRKIPSVGRQGEHLSNSTSAFSTRSDAS. The span at 1365-1380 shows a compositional bias: polar residues; the sequence is HLSNSTSAFSTRSDAS. Positions 1413-1471 constitute a VWFC domain; that stretch reads TECVDAGGESHANNTKWKKDACTICECKDGQVTCFVEACPPATCAVPVNIPGACCPVCL.

It belongs to the peroxidase family. XPO subfamily. Homotrimer; disulfide-linked. The homotrimer form is predominant. Homooligomer; disulfide-linked. Oligomerization occurs intracellularly before C-terminal proteolytic cleavage. Interacts with PXDNL; this interaction inhibits the peroxidase activity of PXDN. Ca(2+) is required as a cofactor. Heme b serves as cofactor. Glycosylated. Four sites are completely N-glycosylated (Asn-640, Asn-731, Asn-865 and Asn-1425), whereas the others are found partially glycosylated. Post-translationally, processed by FURIN and the proteolytic processing largely depends on the peroxidase activity of PXDN. The proteolytic cleavage occurs after intracellular homotrimerization and releases into the extracellular matrix a large, catalytically active fragment and a smaller fragment consisting primarily of the C-terminal VWFC domain. The processing enhances both peroxidase activity and sulfilimine cross-links formation. In terms of tissue distribution, expressed at higher levels in heart, lung, ovary, spleen, intestine and placenta, and at lower levels in liver, colon, pancreas, kidney, thymus, skeletal muscle and prostate. Expressed in tumors such as melanoma, breast cancer, ovarian cancer and glioblastoma. A shorter form probably lacking the signal sequence is found in testis and in EB1 cells undergoing p53/TP53-dependent apoptosis.

Its subcellular location is the secreted. It localises to the extracellular space. The protein localises to the extracellular matrix. It is found in the endoplasmic reticulum. The protein resides in the cell surface. Its subcellular location is the basement membrane. The enzyme catalyses L-lysyl-[collagen] + L-methionyl-[collagen] + H2O2 = [collagen]-L-lysyl-N-S-L-methionyl-[collagen] + 2 H2O + H(+). It carries out the reaction bromide + H2O2 = hypobromite + H2O. It catalyses the reaction L-lysyl-[collagen] + L-methionyl-[collagen] + hypobromite = [collagen]-L-lysyl-N-S-L-methionyl-[collagen] + bromide + H2O + H(+). The catalysed reaction is L-tyrosyl-[protein] + bromide + H2O2 + H(+) = 3-bromo-L-tyrosyl-[protein] + 2 H2O. The enzyme catalyses hypobromite + L-tyrosyl-[protein] + H(+) = 3-bromo-L-tyrosyl-[protein] + H2O. The hypobromous acid formation is activated by increasing nitrite concentrations and inhibited by increasing urate concentrations. In terms of biological role, catalyzes the two-electron oxidation of bromide by hydrogen peroxide and generates hypobromite as a reactive intermediate which mediates the formation of sulfilimine cross-links between methionine and hydroxylysine residues within an uncross-linked collagen IV/COL4A1 NC1 hexamer. In turns, directly contributes to the collagen IV network-dependent fibronectin/FN and laminin assembly, which is required for full extracellular matrix (ECM)-mediated signaling. Thus, sulfilimine cross-links are essential for growth factor-induced cell proliferation and survival in endothelial cells, an event essential to basement membrane integrity. In addition, through the bromide oxidation, may promote tubulogenesis and induce angiogenesis through ERK1/2, Akt, and FAK pathways. Moreover brominates alpha2 collagen IV chain/COL4A2 at 'Tyr-1485' and leads to bromine enrichment of the basement membranes. In vitro, can also catalyze the two-electron oxidation of thiocyanate and iodide and these two substrates could effectively compete with bromide and thus inhibit the formation of sulfilimine bonds. Binds laminins. May play a role in the organization of eyeball structure and lens development during eye development. This is Peroxidasin homolog from Homo sapiens (Human).